Consider the following 28-residue polypeptide: Chassatide C12 (28 aa).

The segment at residues 1–28 (EYCGESCYLIPCFTPGCYCVSRQCVNKN) is a cross-link (cyclopeptide (Glu-Asn)). Disulfide bonds link cysteine 3–cysteine 17, cysteine 7–cysteine 19, and cysteine 12–cysteine 24.

In terms of processing, this is a cyclic peptide. In terms of tissue distribution, expressed in fruit, pedicel, leaf and stem but not in root (at protein level).

In terms of biological role, probably participates in a plant defense mechanism. This chain is Chassatide C12, found in Chassalia chartacea (Chassalia curviflora).